A 256-amino-acid polypeptide reads, in one-letter code: Adenylate kinase (256 aa).

49-54 (GAGKGT) lines the ATP pocket. Residues 69–98 (ATGDMLRDQVEKKTPLGIAAKKIMDAGGLV) are NMP. AMP-binding positions include Thr70, Arg75, 96–98 (GLV), 125–128 (GFPR), and Gln132. The LID stretch occupies residues 166 to 203 (GRLIHPASGRSYHKIFNPPKKAGIDDLTGEPLIQRSDD). Residues Arg167 and 176 to 177 (SY) contribute to the ATP site. AMP is bound by residues Arg200 and Arg211. Gln239 contributes to the ATP binding site.

This sequence belongs to the adenylate kinase family. AK2 subfamily. Monomer.

The protein resides in the cytoplasm. It is found in the cytosol. It localises to the mitochondrion intermembrane space. It carries out the reaction AMP + ATP = 2 ADP. Catalyzes the reversible transfer of the terminal phosphate group between ATP and AMP. Plays an important role in cellular energy homeostasis and in adenine nucleotide metabolism. Adenylate kinase activity is critical for regulation of the phosphate utilization and the AMP de novo biosynthesis pathways. This Coprinopsis cinerea (strain Okayama-7 / 130 / ATCC MYA-4618 / FGSC 9003) (Inky cap fungus) protein is Adenylate kinase.